A 30-amino-acid polypeptide reads, in one-letter code: Vitri peptide A (30 aa).

A cross-link (cyclopeptide (Gly-Asn)) is located at residues Gly-1–Asn-30. 3 disulfide bridges follow: Cys-4/Cys-20, Cys-8/Cys-22, and Cys-13/Cys-27.

Post-translationally, this is a cyclic peptide.

Its function is as follows. Probably participates in a plant defense mechanism. Has strong cytotoxic activity against human lymphoma U-937 GTB and human myeloma RPMI-8226/s cell lines. The chain is Vitri peptide A from Viola arvensis (European field pansy).